Consider the following 384-residue polypeptide: PqqA peptide cyclase (384 aa).

A Radical SAM core domain is found at 5–220 (VGLPLWLLAE…TNEYREKLKA (216 aa)). Residues Cys19, Cys23, and Cys26 each coordinate [4Fe-4S] cluster.

It belongs to the radical SAM superfamily. PqqE family. Interacts with PqqD. The interaction is necessary for activity of PqqE. [4Fe-4S] cluster is required as a cofactor.

The catalysed reaction is [PQQ precursor protein] + S-adenosyl-L-methionine = E-Y cross-linked-[PQQ precursor protein] + 5'-deoxyadenosine + L-methionine + H(+). It participates in cofactor biosynthesis; pyrroloquinoline quinone biosynthesis. Its function is as follows. Catalyzes the cross-linking of a glutamate residue and a tyrosine residue in the PqqA protein as part of the biosynthesis of pyrroloquinoline quinone (PQQ). The sequence is that of PqqA peptide cyclase from Acinetobacter baumannii (strain ACICU).